The sequence spans 119 residues: Large ribosomal subunit protein uL22c (119 aa).

This sequence belongs to the universal ribosomal protein uL22 family. In terms of assembly, part of the 50S ribosomal subunit.

Its subcellular location is the plastid. The protein localises to the chloroplast. Functionally, this protein binds specifically to 23S rRNA. In terms of biological role, the globular domain of the protein is located near the polypeptide exit tunnel on the outside of the subunit, while an extended beta-hairpin is found that lines the wall of the exit tunnel in the center of the 70S ribosome. In Chaetosphaeridium globosum (Charophycean green alga), this protein is Large ribosomal subunit protein uL22c (rpl22).